The following is a 351-amino-acid chain: Adenine deaminase (351 aa).

Zn(2+)-binding residues include histidine 20, histidine 22, and histidine 200. Glutamate 203 serves as the catalytic Proton donor. Aspartate 281 lines the Zn(2+) pocket. Aspartate 282 serves as a coordination point for substrate.

The protein belongs to the metallo-dependent hydrolases superfamily. Adenosine and AMP deaminases family. Adenine deaminase type 2 subfamily. Zn(2+) is required as a cofactor.

It carries out the reaction adenine + H2O + H(+) = hypoxanthine + NH4(+). Catalyzes the hydrolytic deamination of adenine to hypoxanthine. Plays an important role in the purine salvage pathway and in nitrogen catabolism. The sequence is that of Adenine deaminase from Cupriavidus taiwanensis (strain DSM 17343 / BCRC 17206 / CCUG 44338 / CIP 107171 / LMG 19424 / R1) (Ralstonia taiwanensis (strain LMG 19424)).